We begin with the raw amino-acid sequence, 332 residues long: Putative integrase/recombinase y4rC (332 aa).

The 94-residue stretch at 5–98 folds into the Core-binding (CB) domain; the sequence is ASLAPLLESF…AIHSFFRYAA (94 aa). The Tyr recombinase domain occupies 122–307; that stretch reads TLVNFLTRPE…TLAMKEAALA (186 aa). Active-site residues include R162, K187, H259, R262, and H285. The active-site O-(3'-phospho-DNA)-tyrosine intermediate is Y294.

The protein belongs to the 'phage' integrase family.

The chain is Putative integrase/recombinase y4rC from Sinorhizobium fredii (strain NBRC 101917 / NGR234).